Reading from the N-terminus, the 382-residue chain is Dual-specificity RNA methyltransferase RlmN (382 aa).

Glutamate 96 (proton acceptor) is an active-site residue. The Radical SAM core domain occupies 102–342 (QGKRGTLCVS…VRTTRGEDID (241 aa)). Cysteines 109 and 345 form a disulfide. Cysteine 116, cysteine 120, and cysteine 123 together coordinate [4Fe-4S] cluster. S-adenosyl-L-methionine contacts are provided by residues 170–171 (GE), serine 202, 224–226 (SLH), and asparagine 302. The S-methylcysteine intermediate role is filled by cysteine 345.

Belongs to the radical SAM superfamily. RlmN family. The cofactor is [4Fe-4S] cluster.

The protein localises to the cytoplasm. The enzyme catalyses adenosine(2503) in 23S rRNA + 2 reduced [2Fe-2S]-[ferredoxin] + 2 S-adenosyl-L-methionine = 2-methyladenosine(2503) in 23S rRNA + 5'-deoxyadenosine + L-methionine + 2 oxidized [2Fe-2S]-[ferredoxin] + S-adenosyl-L-homocysteine. It catalyses the reaction adenosine(37) in tRNA + 2 reduced [2Fe-2S]-[ferredoxin] + 2 S-adenosyl-L-methionine = 2-methyladenosine(37) in tRNA + 5'-deoxyadenosine + L-methionine + 2 oxidized [2Fe-2S]-[ferredoxin] + S-adenosyl-L-homocysteine. Specifically methylates position 2 of adenine 2503 in 23S rRNA and position 2 of adenine 37 in tRNAs. m2A2503 modification seems to play a crucial role in the proofreading step occurring at the peptidyl transferase center and thus would serve to optimize ribosomal fidelity. The protein is Dual-specificity RNA methyltransferase RlmN of Pseudomonas fluorescens (strain SBW25).